The following is a 445-amino-acid chain: Aminopeptidase C (445 aa).

Residues cysteine 69, histidine 363, and asparagine 385 contribute to the active site.

The protein belongs to the peptidase C1 family. In terms of assembly, homohexamer.

The catalysed reaction is Inactivates bleomycin B2 (a cytotoxic glycometallopeptide) by hydrolysis of a carboxyamide bond of beta-aminoalanine, but also shows general aminopeptidase activity. The specificity varies somewhat with source, but amino acid arylamides of Met, Leu and Ala are preferred.. This is Aminopeptidase C (pepC) from Streptococcus thermophilus.